We begin with the raw amino-acid sequence, 322 residues long: Cell division control protein 10 (322 aa).

Position 1 is an N-acetylmethionine (Met1). Residues 29–302 (KGFQFNIMVV…EGFRARQLIA (274 aa)) form the Septin-type G domain. Residues 39 to 46 (GQSGLGKS) form a G1 motif region. Residues 39 to 46 (GQSGLGKS), Thr74, Gly100, and 180 to 188 (KSDTLTLDE) contribute to the GTP site. The segment at 97 to 100 (DTPG) is G3 motif. Residues 179–182 (GKSD) are G4 motif. A Phosphothreonine modification is found at Thr216. Residues Gly236 and Arg251 each coordinate GTP.

It belongs to the TRAFAC class TrmE-Era-EngA-EngB-Septin-like GTPase superfamily. Septin GTPase family. Component of the septin complex which consists of CDC3, CDC10, CDC11, CDC12 and probably SHS1 and rearranges to a cortical collar of highly ordered filaments at the mother-bud-neck. A complex formed by CDC3, CDC10, CDC11 and CDC12 is capable of forming long filaments in vitro and the components seem to be present in a 2:2:2:2 arrangement in vivo. The filaments are proposed to be formed by the end-to-end polymerization of CDC3-CDC12-CDC11 complexes with CDC10 serving as a bridge to bundle the polymers into paired filaments. Component of the GIN4 complex composed of at least BNI5, CDC3, CDC10, CDC11, CDC12, GIN4, NAP1 and SHS1. Self-associates. Interacts with SYP1.

The protein resides in the membrane. It is found in the bud neck. Septins are GTPases involved in cytokinesis that assemble early in the cell cycle as a patch at the incipient bud site and form a ring approximate 15 minutes before bud emergence, which transforms into an hour-glass shaped collar of cortical filaments that spans both sides of the mother-bud neck. This collar persists until just before cytokinesis, when it splits into two rings that occupy opposite sides of the neck. The septins at the bud neck serve as a structural scaffold that recruits different components involved in diverse processes at specific stages during the cell cycle. Many proteins bind asymmetrically to the septin collar. The septin assembly is regulated by protein kinases GIN4 and/or CLA4. May act by recruiting MYO1 and HOF1, a protein involved in septation, to the site of cleavage. Septins are also involved in cell morphogenesis, bud site selection, chitin deposition, cell cycle regulation, cell compartmentalization and spore wall formation. This Saccharomyces cerevisiae (strain ATCC 204508 / S288c) (Baker's yeast) protein is Cell division control protein 10 (CDC10).